A 138-amino-acid polypeptide reads, in one-letter code: Transcriptional activator protein Pur-alpha (138 aa).

Residue Ser70 is modified to Phosphoserine.

It belongs to the PUR DNA-binding protein family. As to quaternary structure, homodimer, heterodimer with PURB and heterotrimer with PURB and YBX1/Y-box protein 1. Interacts with FMR1; this interaction occurs in association with polyribosome.

It is found in the nucleus. Functionally, this is a probable transcription activator that specifically binds the purine-rich single strand of the PUR element located upstream of the c-Myc gene. May play a role in the initiation of DNA replication and in recombination. The polypeptide is Transcriptional activator protein Pur-alpha (Rattus norvegicus (Rat)).